The following is a 605-amino-acid chain: Poly [ADP-ribose] polymerase 2-B (605 aa).

A disordered region spans residues Asn96 to Asp122. Basic and acidic residues predominate over residues Asp108 to Asp122. Residues Ala153–Phe260 form the WGR domain. Positions Glu250–Glu370 constitute a PARP alpha-helical domain. In terms of domain architecture, PARP catalytic spans His378–Gly605.

Belongs to the ARTD/PARP family.

Its subcellular location is the nucleus. The catalysed reaction is NAD(+) + (ADP-D-ribosyl)n-acceptor = nicotinamide + (ADP-D-ribosyl)n+1-acceptor + H(+).. It catalyses the reaction L-aspartyl-[protein] + NAD(+) = 4-O-(ADP-D-ribosyl)-L-aspartyl-[protein] + nicotinamide. It carries out the reaction L-glutamyl-[protein] + NAD(+) = 5-O-(ADP-D-ribosyl)-L-glutamyl-[protein] + nicotinamide. In terms of biological role, involved in the base excision repair (BER) pathway, by catalyzing the poly(ADP-ribosyl)ation of a limited number of acceptor proteins involved in chromatin architecture and in DNA metabolism. This modification follows DNA damages and appears as an obligatory step in a detection/signaling pathway leading to the reparation of DNA strand breaks. The chain is Poly [ADP-ribose] polymerase 2-B (PARP2-B) from Oryza sativa subsp. japonica (Rice).